The following is a 548-amino-acid chain: Spindle pole body-associated protein cut12 (548 aa).

The interaction with plo1 stretch occupies residues 122–325 (FKSPLLQSTP…GQQSKYKGKE (204 aa)). A disordered region spans residues 123–182 (KSPLLQSTPKPNINNPDNENKSKHDEFDNRYNININESYKNETKSNQRLGEDVPSKKKYP). The span at 126 to 139 (LLQSTPKPNINNPD) shows a compositional bias: polar residues. Composition is skewed to basic and acidic residues over residues 140–151 (NENKSKHDEFDN) and 161–182 (YKNE…KKYP). Residues 261–312 (KQKFSMLDSAHSDLELELTSIRERLESLILEKQEEINFWKQRCRALETEKIH) adopt a coiled-coil conformation. Residues 344 to 356 (PITTKVVSRPSQS) are compositionally biased toward polar residues. Disordered stretches follow at residues 344–369 (PITT…PSKN) and 510–548 (SRVD…QLNS). The stretch at 522-548 (RTANAKKRLEERRRRRKLKLQELQLNS) forms a coiled coil.

In terms of assembly, self-associates. Interacts with plo1.

The protein resides in the cytoplasm. It is found in the cytoskeleton. Its subcellular location is the microtubule organizing center. The protein localises to the spindle pole body. Functionally, required for bipolar spindle formation. May act as a regulator of the p34cdc2/cyclin B kinase. Required for full activation of the plo1 kinase. However, in cut12.1 cells at restrictive temperature the H1 kinase does rise concomitant with entry into mitosis, indicating that cut12 is not required for activation of p34cdc2/cyclin B. The cut12.s11 allele may promote cdc2-independent phosphorylation of SPB proteins thereby overcoming the requirement for cdc25 in cell cycle progression. This Schizosaccharomyces pombe (strain 972 / ATCC 24843) (Fission yeast) protein is Spindle pole body-associated protein cut12 (cut12).